The primary structure comprises 184 residues: Peptidoglycan-recognition protein SC2 (184 aa).

The signal sequence occupies residues 1–20 (MANKALILLAVLFCAQAVLG). The N-acetylmuramoyl-L-alanine amidase domain occupies 45-169 (SYAVIHHTAG…RQVGSTECPG (125 aa)). H50 contributes to the Zn(2+) binding site. The cysteines at positions 57 and 63 are disulfide-linked. Residues H159 and C167 each coordinate Zn(2+).

This sequence belongs to the N-acetylmuramoyl-L-alanine amidase 2 family. The cofactor is Zn(2+). Constitutively expressed at high level in gut, in addition to the induced expression in fat body.

The protein resides in the secreted. The catalysed reaction is Hydrolyzes the link between N-acetylmuramoyl residues and L-amino acid residues in certain cell-wall glycopeptides.. Functionally, N-acetylmuramyl-L-alanine amidase involved in innate immunity by degrading bacterial peptidoglycans (PGN). Probably plays a scavenger role by digesting biologically active PGN into biologically inactive fragments. Has no direct bacteriolytic activity. This chain is Peptidoglycan-recognition protein SC2 (PGRP-SC2), found in Drosophila melanogaster (Fruit fly).